A 426-amino-acid polypeptide reads, in one-letter code: UPF0164 protein TP_0548 (426 aa).

Positions 1 to 37 (MISCSVRRRPRWEPQVGAAFLAFALLPVLASGRGMQA) are cleaved as a signal peptide.

The protein belongs to the UPF0164 family.

In Treponema pallidum (strain Nichols), this protein is UPF0164 protein TP_0548.